Consider the following 467-residue polypeptide: Ribulose bisphosphate carboxylase large chain (467 aa).

At K5 the chain carries N6,N6,N6-trimethyllysine. Substrate contacts are provided by N114 and T164. The active-site Proton acceptor is the K166. Residue K168 coordinates substrate. Mg(2+) contacts are provided by K192, D194, and E195. N6-carboxylysine is present on K192. H285 (proton acceptor) is an active-site residue. Substrate contacts are provided by R286, H318, and S370.

This sequence belongs to the RuBisCO large chain family. Type I subfamily. Heterohexadecamer of 8 large chains and 8 small chains; disulfide-linked. The disulfide link is formed within the large subunit homodimers. The cofactor is Mg(2+). The disulfide bond which can form in the large chain dimeric partners within the hexadecamer appears to be associated with oxidative stress and protein turnover.

The protein localises to the plastid. Its subcellular location is the chloroplast. It carries out the reaction 2 (2R)-3-phosphoglycerate + 2 H(+) = D-ribulose 1,5-bisphosphate + CO2 + H2O. It catalyses the reaction D-ribulose 1,5-bisphosphate + O2 = 2-phosphoglycolate + (2R)-3-phosphoglycerate + 2 H(+). Its function is as follows. RuBisCO catalyzes two reactions: the carboxylation of D-ribulose 1,5-bisphosphate, the primary event in carbon dioxide fixation, as well as the oxidative fragmentation of the pentose substrate in the photorespiration process. Both reactions occur simultaneously and in competition at the same active site. This Eriodictyon californicum (California yerba santa) protein is Ribulose bisphosphate carboxylase large chain.